The sequence spans 470 residues: Isocitrate dehydrogenase (NAD(+)), mitochondrial (470 aa).

The transit peptide at 1–26 (MTRVERGRVLARAIERAVAHRASARR) directs the protein to the mitochondrion. NAD(+)-binding positions include 138–140 (TVT) and N159. Residues 157 to 163 (SPNGAMR), R193, Y200, K275, and D319 each bind D-threo-isocitrate. Mg(2+) is bound at residue D319. K324 serves as a coordination point for NAD(+). D343 serves as a coordination point for D-threo-isocitrate. Positions 343 and 347 each coordinate Mg(2+). NAD(+)-binding positions include 380 to 385 (HGTVAD) and N399.

The protein belongs to the isocitrate and isopropylmalate dehydrogenases family. Forms homodimers. The cofactor is Mg(2+). Mn(2+) serves as cofactor.

The protein resides in the mitochondrion. The catalysed reaction is D-threo-isocitrate + NAD(+) = 2-oxoglutarate + CO2 + NADH. The homodimer exhibits allosteric regulation by isocitrate. Performs an essential role in the oxidative function of the tricarboxylic acid cycle and respiration. Catalyzes the decarboxylation of isocitrate to produce 2-oxoglutarate and generate NADH to provide electrons for energy production. The chain is Isocitrate dehydrogenase (NAD(+)), mitochondrial from Ostreococcus tauri.